We begin with the raw amino-acid sequence, 105 residues long: Met repressor (105 aa).

Belongs to the MetJ family. Homodimer.

It is found in the cytoplasm. Its function is as follows. This regulatory protein, when combined with SAM (S-adenosylmethionine) represses the expression of the methionine regulon and of enzymes involved in SAM synthesis. This Glaesserella parasuis serovar 5 (strain SH0165) (Haemophilus parasuis) protein is Met repressor.